The primary structure comprises 489 residues: Cytochrome P450 monooxygenase AMT3 (489 aa).

A helical transmembrane segment spans residues 292-312 (LFMVAGTETTITALSGLVFLL). Residue cysteine 436 participates in heme binding.

The protein belongs to the cytochrome P450 family. Heme is required as a cofactor.

Its subcellular location is the membrane. The protein operates within mycotoxin biosynthesis. Cytochrome P450 monooxygenase; part of the gene clusters that mediate the biosynthesis of AM-toxins, host-selective toxins (HSTs) causing Alternaria blotch on apple, a worldwide distributed disease. AM-toxins are cyclic depsipeptides containing the 3 residues 2-hydroxy-isovaleric acid (2-HIV), dehydroalanine, L-alanine which are common for all 3 AM-toxins I to III. The fourth precursor is L-alpha-amino-methoxyphenyl-valeric acid (L-Amv) for AM-toxin I, L-alpha-amino-phenyl-valeric acid (L-Apv) for AM-toxin II, and L-alpha-amino-hydroxyphenyl-valeric acid (L-Ahv) for AM-toxin III. AM-toxins have two target sites for affecting susceptible apple cells; they cause invagination of the plasma membrane and electrolyte loss and chloroplast disorganization. The non-ribosomal peptide synthetase AMT1 contains 4 catalytic modules and is responsible for activation of each residue in AM-toxin. The aldo-keto reductase AMT2 catalyzes the conversion of 2-keto-isovaleric acid (2-KIV) to 2-hydroxy-isovaleric acid (2-HIV), one of the precursor residues incorporated by AMT1 during AM-toxin biosynthesis, by reduction of its ketone to an alcohol. The cytochrome P450 monooxygenase AMT3 and the thioesterase AMT4 are also important for AM-toxin production, but their exact function within the AM-toxin biosynthesis are not known yet. Up to 21 proteins (including AMT1 to AMT4) are predicted to be involved in AM-toxin biosynthesis since their expression ishighly up-regulated in AM-toxin-producing cultures. This is Cytochrome P450 monooxygenase AMT3 from Alternaria alternata (Alternaria rot fungus).